A 486-amino-acid chain; its full sequence is Monocarboxylate transporter 12 (486 aa).

At 1–9 (MTKITRVSL) the chain is on the cytoplasmic side. 12 helical membrane-spanning segments follow: residues 10–30 (ASPP…LVTI), 58–78 (AWIH…GSVV), 86–106 (AGIM…SFAT), 115–135 (LGVL…AMVG), 148–168 (IAMS…QLLI), 177–197 (LLIL…MRPI), 253–273 (FVVL…LFVY), 289–309 (AFLM…FGWL), 320–340 (YVCY…LPML), 353–373 (FGYF…EIVG), 383–403 (VVYF…GWLV), and 410–430 (TAAF…LGFV). The Cytoplasmic portion of the chain corresponds to 431 to 486 (RIVKRMKRTQVPFPVKDSDPKLQLWTNGSVAYSVARELDQKDEEPLPKARSGCNLT).

It belongs to the major facilitator superfamily. Monocarboxylate porter (TC 2.A.1.13) family. In terms of assembly, interacts with isoform 2 of BSG; this interaction is required for its localization to the plasma membrane. Highly expressed in the lung, liver, kidney, and pancreas. Expressed in eye lens.

It localises to the cell membrane. The protein resides in the basolateral cell membrane. It carries out the reaction creatine(in) = creatine(out). The enzyme catalyses guanidinoacetate(in) = guanidinoacetate(out). With respect to regulation, creatine uptake is inhibited by carbonyl cyanide 3-chlorophenylhydrazone (CCCP) and by valinomycin. In terms of biological role, functions as a transporter for creatine and as well for its precursor guanidinoacetate. Transport of creatine and GAA is independent of resting membrane potential and extracellular Na(+), Cl(-), or pH. Contributes to the process of creatine biosynthesis and distribution. This chain is Monocarboxylate transporter 12, found in Mus musculus (Mouse).